Here is a 485-residue protein sequence, read N- to C-terminus: Taxane 13-alpha-hydroxylase (485 aa).

Position 431 (Cys-431) interacts with heme.

It belongs to the cytochrome P450 family. It depends on heme as a cofactor.

It catalyses the reaction taxa-4(20),11-dien-5alpha-ol + reduced [NADPH--hemoprotein reductase] + O2 = taxa-4(20),11-dien-5alpha,13alpha-diol + oxidized [NADPH--hemoprotein reductase] + H2O + H(+). It functions in the pathway alkaloid biosynthesis; taxol biosynthesis. Its function is as follows. Involved in the transformation of a taxadienyl acetate by hydroxylation at C13 to yield taxadien-5-alpha-acetoxy-13-alpha-ol. This is Taxane 13-alpha-hydroxylase (CYP725A2) from Taxus cuspidata (Japanese yew).